We begin with the raw amino-acid sequence, 428 residues long: Cholecystokinin receptor type A (428 aa).

At 1–41 (MDVVDSLLVNGSNITPPCELGLENETLFCLDQPRPSKEWQP) the chain is on the extracellular side. N-linked (GlcNAc...) asparagine glycosylation is found at Asn-10 and Asn-24. Cys-18 and Cys-29 are joined by a disulfide. The chain crosses the membrane as a helical span at residues 42–67 (AVQILLYSLIFLLSVLGNTLVITVLI). Topologically, residues 68–77 (RNKRMRTVTN) are cytoplasmic. Residues 78–104 (IFLLSLAVSDLMLCLFCMPFNLIPNLL) form a helical membrane-spanning segment. Topologically, residues 105–115 (KDFIFGSAVCK) are extracellular. Cys-114 and Cys-196 are disulfide-bonded. The helical transmembrane segment at 116–137 (TTTYFMGTSVSVSTFNLVAISL) threads the bilayer. Residues 138 to 157 (ERYGAICKPLQSRVWQTKSH) are Cytoplasmic-facing. Residues 158–178 (ALKVIAATWCLSFTIMTPYPI) traverse the membrane as a helical segment. Residues 179 to 210 (YSNLVPFTKNNNQTANMCRFLLPNDVMQQSWH) are Extracellular-facing. Residue Asn-190 is glycosylated (N-linked (GlcNAc...) asparagine). The chain crosses the membrane as a helical span at residues 211–234 (TFLLLILFLIPGIVMMVAYGLISL). Over 235–313 (ELYQGIKFEA…NLMAKKRVIR (79 aa)) the chain is Cytoplasmic. Residues 248-272 (KSAKERKPSTTSSGKYEDSDGCYLQ) are disordered. Residues 314–334 (MLIVIVVLFFLCWMPIFSANA) form a helical membrane-spanning segment. Residues 335–349 (WRAYDTASAERRLSG) are Extracellular-facing. Residues 350–373 (TPISFILLLSYTSSCVNPIIYCFM) traverse the membrane as a helical segment. The Cytoplasmic portion of the chain corresponds to 374–428 (NKRFRLGFMATFPCCPNPGPPGARGEVGEEEEGGTTGASLSRFSYSHMSASVPPQ). A lipid anchor (S-palmitoyl cysteine) is attached at Cys-387. A disordered region spans residues 394–428 (PGARGEVGEEEEGGTTGASLSRFSYSHMSASVPPQ). Residues 411–422 (ASLSRFSYSHMS) are compositionally biased toward polar residues.

It belongs to the G-protein coupled receptor 1 family.

The protein localises to the cell membrane. In terms of biological role, receptor for cholecystokinin. Mediates pancreatic growth and enzyme secretion, smooth muscle contraction of the gall bladder and stomach. Has a 1000-fold higher affinity for CCK rather than for gastrin. It modulates feeding and dopamine-induced behavior in the central and peripheral nervous system. This receptor mediates its action by association with G proteins that activate a phosphatidylinositol-calcium second messenger system. This Homo sapiens (Human) protein is Cholecystokinin receptor type A (CCKAR).